Here is a 99-residue protein sequence, read N- to C-terminus: UPF0386 protein mll0189 (99 aa).

This sequence belongs to the UPF0386 family.

The sequence is that of UPF0386 protein mll0189 from Mesorhizobium japonicum (strain LMG 29417 / CECT 9101 / MAFF 303099) (Mesorhizobium loti (strain MAFF 303099)).